We begin with the raw amino-acid sequence, 280 residues long: 23S rRNA (guanine(748)-N(1))-methyltransferase (280 aa).

The Zn(2+) site is built by C11, C14, C27, and H31. S-adenosyl-L-methionine contacts are provided by residues Y70, 100-101 (TG), and H188.

This sequence belongs to the methyltransferase superfamily. RlmA family.

The enzyme catalyses guanosine(748) in 23S rRNA + S-adenosyl-L-methionine = N(1)-methylguanosine(748) in 23S rRNA + S-adenosyl-L-homocysteine + H(+). Specifically methylates the guanosine in position 748 of 23S rRNA. Confers resistance to the macrolide antibiotic tylosine. This is 23S rRNA (guanine(748)-N(1))-methyltransferase (rlmAII) from Streptomyces fradiae (Streptomyces roseoflavus).